We begin with the raw amino-acid sequence, 99 residues long: Malonate decarboxylase acyl carrier protein (99 aa).

O-(phosphoribosyl dephospho-coenzyme A)serine is present on Ser25.

This sequence belongs to the MdcC family. In terms of processing, covalently binds the prosthetic group of malonate decarboxylase.

The protein localises to the cytoplasm. In terms of biological role, subunit of malonate decarboxylase, it is an acyl carrier protein to which acetyl and malonyl thioester residues are bound via a 2'-(5''-phosphoribosyl)-3'-dephospho-CoA prosthetic group and turn over during the catalytic mechanism. The sequence is that of Malonate decarboxylase acyl carrier protein from Pseudomonas fluorescens (strain SBW25).